Here is a 477-residue protein sequence, read N- to C-terminus: Aryl-phospho-beta-D-glucosidase BglC (477 aa).

The active-site Proton donor is glutamate 170. The Nucleophile role is filled by glutamate 378.

The protein belongs to the glycosyl hydrolase 1 family.

The enzyme catalyses 6-phospho-beta-D-glucosyl-(1-&gt;4)-D-glucose + H2O = D-glucose 6-phosphate + D-glucose. In terms of biological role, is able to catalyze the hydrolysis of aryl-phospho-beta-D-glucosides such as 4-methylumbelliferyl-phospho-beta-D-glucopyranoside (MUG-P), phosphoarbutin and phosphosalicin. Is not essential for growth on arbutin and salicin as the sole carbon source. The sequence is that of Aryl-phospho-beta-D-glucosidase BglC (bglC) from Bacillus subtilis (strain 168).